A 214-amino-acid polypeptide reads, in one-letter code: Adenylate kinase (214 aa).

10–15 (GAGKGT) serves as a coordination point for ATP. An NMP region spans residues 30–59 (STGDMLRAAVKAQSELGRQAKALMDAGKLV). Residues Thr31, Arg36, 57-59 (KLV), 85-88 (GFPR), and Gln92 each bind AMP. Positions 122-159 (GRRVHAPSGRVYHVKFNPPKQEGKDDVTGELLTSRKDD) are LID. ATP contacts are provided by residues Arg123 and 132-133 (VY). Residues Arg156 and Arg167 each contribute to the AMP site. Arg200 provides a ligand contact to ATP.

Belongs to the adenylate kinase family. Monomer.

Its subcellular location is the cytoplasm. The catalysed reaction is AMP + ATP = 2 ADP. It functions in the pathway purine metabolism; AMP biosynthesis via salvage pathway; AMP from ADP: step 1/1. In terms of biological role, catalyzes the reversible transfer of the terminal phosphate group between ATP and AMP. Plays an important role in cellular energy homeostasis and in adenine nucleotide metabolism. The chain is Adenylate kinase from Sodalis glossinidius (strain morsitans).